Here is a 361-residue protein sequence, read N- to C-terminus: MSKRAYNFCAGPAALPEAVLQRAQGELLDWHGKGLSVMEMSHRSDEFVSIATKAEQDLRDLLGIPSHYKVLFLQGGASQQFAQIPLNLLPEDGTADYIDTGIWGQKAIEEASRYGHVNVAGTAKPYDYFAIPGQNEWKLSKDAAYVHYVANETIGGLEFDWVPEVGDVPLVCDMSSDILSRPIDVSKYGMIYAGAQKNIGPSGILVNIIREDLLGRARSLCPTMLNYKVAADNGSMYNTPPAFAWYLSGLVFEWLKEQGGVAAMGKLNEEKKRTLYDFIDASGLYSNPINLTDRSWMNVPFRLADDRLDKPFLAGADERGLLNLKGHRSVGGMRASIYNAVDINAIKALIAYMAEFEKEHG.

Position 43 (R43) interacts with L-glutamate. Pyridoxal 5'-phosphate-binding positions include 77 to 78 (AS), W103, T153, D173, and Q196. K197 is subject to N6-(pyridoxal phosphate)lysine. 238-239 (NT) is a binding site for pyridoxal 5'-phosphate.

Belongs to the class-V pyridoxal-phosphate-dependent aminotransferase family. SerC subfamily. In terms of assembly, homodimer. Requires pyridoxal 5'-phosphate as cofactor.

It localises to the cytoplasm. The catalysed reaction is O-phospho-L-serine + 2-oxoglutarate = 3-phosphooxypyruvate + L-glutamate. It carries out the reaction 4-(phosphooxy)-L-threonine + 2-oxoglutarate = (R)-3-hydroxy-2-oxo-4-phosphooxybutanoate + L-glutamate. It functions in the pathway amino-acid biosynthesis; L-serine biosynthesis; L-serine from 3-phospho-D-glycerate: step 2/3. The protein operates within cofactor biosynthesis; pyridoxine 5'-phosphate biosynthesis; pyridoxine 5'-phosphate from D-erythrose 4-phosphate: step 3/5. Its function is as follows. Catalyzes the reversible conversion of 3-phosphohydroxypyruvate to phosphoserine and of 3-hydroxy-2-oxo-4-phosphonooxybutanoate to phosphohydroxythreonine. The sequence is that of Phosphoserine aminotransferase from Pseudomonas fluorescens (strain SBW25).